A 359-amino-acid polypeptide reads, in one-letter code: Transcription factor bHLH130 (359 aa).

Serine 60 carries the phosphoserine modification. The segment at 161–186 (EEDEESPSNSNGLRRHCSLSSRPPSS) is disordered. A compositionally biased stretch (polar residues) spans 167 to 184 (PSNSNGLRRHCSLSSRPP). The bHLH domain occupies 285–335 (CATHPRSIAERVRRTRISERMRKLQELVPNMDKQTNTSDMLDLAVDYIKDL).

In terms of assembly, homodimer.

It is found in the nucleus. The protein is Transcription factor bHLH130 (BHLH130) of Arabidopsis thaliana (Mouse-ear cress).